We begin with the raw amino-acid sequence, 352 residues long: Ion-translocating oxidoreductase complex subunit D (352 aa).

4 consecutive transmembrane segments (helical) span residues 20 to 40 (IMLL…WFFG), 42 to 62 (GTLV…ALVL), 89 to 109 (IPPL…VIIA), and 123 to 143 (PAMI…TSWL). T187 bears the FMN phosphoryl threonine mark. Transmembrane regions (helical) follow at residues 214-234 (ILAG…GLWL), 242-262 (WHIP…GWLF), 267-287 (LAAP…FFIL), 301-321 (LIFG…GGYP), and 322-342 (DGVA…DYYT).

The protein belongs to the NqrB/RnfD family. As to quaternary structure, the complex is composed of six subunits: RsxA, RsxB, RsxC, RsxD, RsxE and RsxG. It depends on FMN as a cofactor.

It is found in the cell inner membrane. Part of a membrane-bound complex that couples electron transfer with translocation of ions across the membrane. Required to maintain the reduced state of SoxR. This is Ion-translocating oxidoreductase complex subunit D from Shigella boydii serotype 18 (strain CDC 3083-94 / BS512).